The sequence spans 300 residues: Ribosomal protein bS6--L-glutamate ligase (300 aa).

Residues 104 to 287 (MQLLARQGID…IAGKMIRWIE (184 aa)) enclose the ATP-grasp domain. Residues Lys141, 178–179 (EY), Asp187, and 211–213 (RSN) contribute to the ATP site. Residues Asp248, Glu260, and Asn262 each contribute to the Mg(2+) site. Residues Asp248, Glu260, and Asn262 each contribute to the Mn(2+) site.

It belongs to the RimK family. The cofactor is Mg(2+). It depends on Mn(2+) as a cofactor.

Functionally, an L-glutamate ligase that catalyzes the ATP-dependent post-translational addition of glutamate residues to the C-terminus of ribosomal protein bS6 (RpsF). Is also able to catalyze the synthesis of poly-alpha-glutamate in vitro, via ATP hydrolysis from unprotected glutamate as substrate. The number of glutamate residues added to either RpsF or to poly-alpha-glutamate changes with pH. The sequence is that of Ribosomal protein bS6--L-glutamate ligase from Shigella flexneri serotype 5b (strain 8401).